We begin with the raw amino-acid sequence, 166 residues long: Signal peptidase complex catalytic subunit SEC11 (166 aa).

Topologically, residues 1 to 9 (MNIRQQLTQ) are cytoplasmic. A helical; Signal-anchor for type II membrane protein membrane pass occupies residues 10–30 (LLTLGYVFASAFMLWKTLSVV). Residues 31 to 166 (ANLHSPIVVV…LGLSSLFSNE (136 aa)) are Lumenal-facing. Active-site charge relay system residues include Ser-44, His-83, and Asp-108. Positions 152–163 (GLLGLLGLSSLF) are C-terminal short (CTS) helix.

The protein belongs to the peptidase S26B family. Component of the signal peptidase complex (SPC) composed of a catalytic subunit SEC11 and three accessory subunits SPC1, SPC2 and SPC3. The complex induces a local thinning of the ER membrane which is used to measure the length of the signal peptide (SP) h-region of protein substrates. This ensures the selectivity of the complex towards h-regions shorter than 18-20 amino acids. SPC associates with the translocon complex.

It is found in the endoplasmic reticulum membrane. The enzyme catalyses Cleavage of hydrophobic, N-terminal signal or leader sequences from secreted and periplasmic proteins.. Its function is as follows. Catalytic component of the signal peptidase complex (SPC) which catalyzes the cleavage of N-terminal signal sequences from nascent proteins as they are translocated into the lumen of the endoplasmic reticulum. Specifically cleaves N-terminal signal peptides that contain a hydrophobic alpha-helix (h-region) shorter than 18-20 amino acids. The polypeptide is Signal peptidase complex catalytic subunit SEC11 (SEC11) (Lodderomyces elongisporus (strain ATCC 11503 / CBS 2605 / JCM 1781 / NBRC 1676 / NRRL YB-4239) (Yeast)).